The primary structure comprises 418 residues: Nisin biosynthesis protein NisC (418 aa).

This sequence to B.subtilis SpaC and S.epidermidis EpiC.

Could be implicated in the processing or the export process of the nisin lantibiotic. The sequence is that of Nisin biosynthesis protein NisC (nisC) from Lactococcus lactis subsp. lactis (Streptococcus lactis).